Consider the following 152-residue polypeptide: Transcriptional repressor NrdR (152 aa).

A zinc finger spans residues 3–34; the sequence is CPKCGSLNDKVVDTRQSKDGTVIRRRRECLDC. One can recognise an ATP-cone domain in the interval 49–139; the sequence is IVVKKKNGTT…VYNEFQDIKD (91 aa).

This sequence belongs to the NrdR family. Zn(2+) serves as cofactor.

Functionally, negatively regulates transcription of bacterial ribonucleotide reductase nrd genes and operons by binding to NrdR-boxes. The chain is Transcriptional repressor NrdR from Persephonella marina (strain DSM 14350 / EX-H1).